Consider the following 2483-residue polypeptide: Cation-independent mannose-6-phosphate receptor (2483 aa).

An N-terminal signal peptide occupies residues 1-35 (MRAVQLGPVPSGPRVALLPPLLLLLLLAAAGSAQA). Residues 36–2295 (QAVDLDALCS…YKGLSERSQA (2260 aa)) are Lumenal-facing. MRH domains lie at 42 to 158 (ALCS…ACKK), 167 to 315 (VPCY…ACHR), 321 to 463 (ESCS…ACIK), 468 to 613 (LLCG…ACVL), 619 to 755 (ENCT…ACPE), 758 to 917 (LECM…ACPI), 925 to 1072 (QACS…ACTP), 1075 to 1212 (VDCQ…ACPV), and 1218 to 1356 (DNCQ…ACPP). 2 disulfides stabilise this stretch: Cys-44–Cys-64 and Cys-72–Cys-79. Asn-107 carries an N-linked (GlcNAc...) asparagine glycan. 8 disulfides stabilise this stretch: Cys-112/Cys-144, Cys-129/Cys-156, Cys-169/Cys-207, Cys-223/Cys-230, Cys-270/Cys-301, Cys-283/Cys-313, Cys-323/Cys-361, and Cys-369/Cys-377. Asn-395 and Asn-430 each carry an N-linked (GlcNAc...) asparagine glycan. 4 disulfide bridges follow: Cys-415–Cys-449, Cys-429–Cys-461, Cys-470–Cys-513, and Cys-525–Cys-532. Residues Asn-537 and Asn-575 are each glycosylated (N-linked (GlcNAc...) asparagine). 2 disulfide bridges follow: Cys-566/Cys-599 and Cys-580/Cys-611. Asn-620 carries N-linked (GlcNAc...) asparagine glycosylation. 5 disulfide bridges follow: Cys-621–Cys-658, Cys-666–Cys-673, Cys-724–Cys-753, Cys-760–Cys-807, and Cys-816–Cys-823. Asn-740 is a glycosylation site (N-linked (GlcNAc...) asparagine). Residue Asn-864 is glycosylated (N-linked (GlcNAc...) asparagine). Disulfide bonds link Cys-868/Cys-903, Cys-886/Cys-915, Cys-927/Cys-964, Cys-970/Cys-981, Cys-1035/Cys-1070, Cys-1077/Cys-1118, and Cys-1127/Cys-1135. N-linked (GlcNAc...) asparagine glycosylation occurs at Asn-944. Asn-1157 carries an N-linked (GlcNAc...) asparagine glycan. Intrachain disulfides connect Cys-1170-Cys-1198, Cys-1183-Cys-1210, Cys-1220-Cys-1255, and Cys-1263-Cys-1275. Asn-1239 is a glycosylation site (N-linked (GlcNAc...) asparagine). A glycan (N-linked (GlcNAc...) asparagine) is linked at Asn-1305. Intrachain disulfides connect Cys-1312–Cys-1342 and Cys-1326–Cys-1354. Asn-1358 is a glycosylation site (N-linked (GlcNAc...) asparagine). 6 MRH domains span residues 1360-1501 (TECS…ACPV), 1507-1641 (DDCQ…ACEQ), 1643-1790 (TECT…VCPD), 1795-1982 (QGCA…VCPP), 1985-2120 (MECK…ACAV), and 2128-2273 (VNGT…VCPL). 2 disulfides stabilise this stretch: Cys-1362/Cys-1401 and Cys-1413/Cys-1420. Asn-1423 carries N-linked (GlcNAc...) asparagine glycosylation. 20 disulfide bridges follow: Cys-1454-Cys-1487, Cys-1469-Cys-1499, Cys-1509-Cys-1546, Cys-1552-Cys-1559, Cys-1591-Cys-1627, Cys-1607-Cys-1639, Cys-1645-Cys-1688, Cys-1699-Cys-1706, Cys-1743-Cys-1776, Cys-1759-Cys-1788, Cys-1797-Cys-1832, Cys-1843-Cys-1849, Cys-1886-Cys-1968, Cys-1896-Cys-1920, Cys-1910-Cys-1935, Cys-1950-Cys-1980, Cys-1987-Cys-2022, Cys-2032-Cys-2039, Cys-2075-Cys-2106, and Cys-2089-Cys-2118. N-linked (GlcNAc...) asparagine glycosylation occurs at Asn-1532. Asn-1649 carries N-linked (GlcNAc...) asparagine glycosylation. N-linked (GlcNAc...) asparagine glycosylation is present at Asn-1750. Asn-1809 is a glycosylation site (N-linked (GlcNAc...) asparagine). A Fibronectin type-II domain is found at 1891–1937 (DDGEPCVFPFIYKGKSYDECVLEGRAKLWCSKTANYDRDHEWGFCRQ). The N-linked (GlcNAc...) asparagine glycan is linked to Asn-2078. Asn-2129 carries N-linked (GlcNAc...) asparagine glycosylation. Cystine bridges form between Cys-2181–Cys-2187, Cys-2225–Cys-2259, and Cys-2241–Cys-2271. A helical transmembrane segment spans residues 2296–2316 (VGAVLSLLLVALTGCLLALLL). Topologically, residues 2317–2483 (HKKERRETVI…DDSDEDLLHI (167 aa)) are cytoplasmic. Lys-2342 is subject to N6-acetyllysine. Residue Ser-2401 is modified to Phosphoserine. The disordered stretch occupies residues 2415–2483 (SGRGAEVESS…DDSDEDLLHI (69 aa)). Arg-2417 bears the Omega-N-methylarginine mark. Composition is skewed to basic and acidic residues over residues 2434–2451 (VLKE…GEKA) and 2471–2483 (SFHD…LLHI). A phosphoserine mark is found at Ser-2471 and Ser-2476.

Belongs to the MRL1/IGF2R family. As to quaternary structure, binds HA-I and HA-II plasma membrane adapters. Interacts with DPP4; the interaction is direct. Binds GGA1, GGA2 and GGA3. Interacts with the heterotrimeric retromer cargo-selective complex (CSC), formed by VPS26 (VPS26A or VPS26B), VPS29 and VPS35; which is involved in retrograde trafficking of the receptor from endosomes to the Golgi apparatus. In terms of processing, palmitoylated. Undergoes cysteine S-palmitoylation which promotes interaction with the retromer cargo-selective complex which mediates its retrograde trafficking to the Golgi apparatus.

Its subcellular location is the golgi apparatus membrane. The protein localises to the endosome membrane. In terms of biological role, mediates the transport of phosphorylated lysosomal enzymes from the Golgi complex and the cell surface to lysosomes. Lysosomal enzymes bearing phosphomannosyl residues bind specifically to mannose-6-phosphate receptors in the Golgi apparatus and the resulting receptor-ligand complex is transported to an acidic prelysosomal compartment where the low pH mediates the dissociation of the complex. The receptor is then recycled back to the Golgi for another round of trafficking through its binding to the retromer. This receptor also binds IGF2. Acts as a positive regulator of T-cell coactivation by binding DPP4. In Mus musculus (Mouse), this protein is Cation-independent mannose-6-phosphate receptor (Igf2r).